We begin with the raw amino-acid sequence, 192 residues long: MTVVNKSFLTILIFFCQILFPLNASALEAPRTVKAWASVLGDNIAETWNEPQHVDLYVPAITWHARFAYDKEKTDRYNERPWGAGMGKSRWDEKGNWHGLYVMAFKDSYNKWEPIAGYGWEATWRPLTDDAFHVGLGYTVGVTARDNWDYIPIPLVLPLASVGYGPATFQMTYIPGTYNNGNVYFAWLRLQF.

Residues 1 to 26 form the signal peptide; that stretch reads MTVVNKSFLTILIFFCQILFPLNASA. Residues H64, D107, and S108 contribute to the active site.

This sequence belongs to the lipid A palmitoyltransferase family. As to quaternary structure, homodimer.

It is found in the cell outer membrane. The catalysed reaction is a lipid A + a 1,2-diacyl-sn-glycero-3-phosphocholine = a hepta-acyl lipid A + a 2-acyl-sn-glycero-3-phosphocholine. The enzyme catalyses a lipid IVA + a 1,2-diacyl-sn-glycero-3-phosphocholine = a lipid IVB + a 2-acyl-sn-glycero-3-phosphocholine. It catalyses the reaction a lipid IIA + a 1,2-diacyl-sn-glycero-3-phosphocholine = a lipid IIB + a 2-acyl-sn-glycero-3-phosphocholine. Transfers a fatty acid residue from the sn-1 position of a phospholipid to the N-linked hydroxyfatty acid chain on the proximal unit of lipid A or its precursors. This is Lipid A acyltransferase PagP from Cronobacter sakazakii (strain ATCC BAA-894) (Enterobacter sakazakii).